The primary structure comprises 89 residues: Large ribosomal subunit protein bL27 (89 aa).

The protein belongs to the bacterial ribosomal protein bL27 family.

This Bacteroides fragilis (strain ATCC 25285 / DSM 2151 / CCUG 4856 / JCM 11019 / LMG 10263 / NCTC 9343 / Onslow / VPI 2553 / EN-2) protein is Large ribosomal subunit protein bL27.